A 363-amino-acid chain; its full sequence is NAD(P)H-quinone oxidoreductase subunit 1, chloroplastic (363 aa).

The next 6 membrane-spanning stretches (helical) occupy residues 27 to 47, 104 to 124, 127 to 147, 248 to 268, 300 to 320, and 343 to 363; these read VWLLIPIFILVLGIVIGVLVI, IAVIAILLSYLVIPFGYHLVL, LSIGVFLWIAISSIAPIGLLM, YSGIKFGLFYVASYLNLLVSS, VFGMTIGIFITLAKAYLFLFI, and FLLPISLGNLLLTTSFQLFSL.

The protein belongs to the complex I subunit 1 family. In terms of assembly, NDH is composed of at least 16 different subunits, 5 of which are encoded in the nucleus.

It is found in the plastid. Its subcellular location is the chloroplast thylakoid membrane. The enzyme catalyses a plastoquinone + NADH + (n+1) H(+)(in) = a plastoquinol + NAD(+) + n H(+)(out). It catalyses the reaction a plastoquinone + NADPH + (n+1) H(+)(in) = a plastoquinol + NADP(+) + n H(+)(out). NDH shuttles electrons from NAD(P)H:plastoquinone, via FMN and iron-sulfur (Fe-S) centers, to quinones in the photosynthetic chain and possibly in a chloroplast respiratory chain. The immediate electron acceptor for the enzyme in this species is believed to be plastoquinone. Couples the redox reaction to proton translocation, and thus conserves the redox energy in a proton gradient. The chain is NAD(P)H-quinone oxidoreductase subunit 1, chloroplastic from Ranunculus macranthus (Large buttercup).